An 834-amino-acid chain; its full sequence is MSNVPSPTVTLEGDSPDAAHEAVSSSSSSFVPVEIQDAIQIIDEHKQFNKQILDYISSRSRQPGDYRIISVFGSQSTGKSTLLNHLFSTNFDVMDEVNRQQTTKGIWMAVSPGVSNSLPANAHVPPENILVMDVEGTDGRERGEDQDFERKAALFALSTSEVLIVNMWESQVGLYQGANMGLLKTVFEVNLSLFGKAKLQNNDHKVLLLFVIRDHLGVTPMESLAATITQDLLRIWEGLNKPADVAHLAFDDFFDLAFHTLSHKVLQNEKFLDDVRSLGNKFLDTSSESFLFKPNYHHDIPIEGWTMYAENCWDQIDHNKDLDLPTQQILVAKFKCDEVAAQCFEEFAKVSHELKNVAVSATQSTEPIDYKDTGLGFQDMKQSVLEDYDLGASKYNKSVYQQKRATLAEKIDSTLQDVFAIYAKHLVTTSLKAVSAGLSRKTRSGTFVEAMEKLKQSSAHDFSQALALISLDGALDTRPFEKEYLAELEQLVSKQQIVELNSILSKALKKLNNGLSTCFVEELANPSELTWDHILEKFRGLSKSALQKYETEEGDYDFRLGTLPSMNKRALKTFDFKSWELLDNLIHKYISKDNLLNILKDRFDDKFRYDENGVPRLYQNTKELEGSFSESKTHALKAFPILTVARLSDGTEVIPKYDVRDKKLKRQYETVREEKEAEEEDEDEWDSEDDENQRAFAELLSESEKAEVMAKFKREMDAKFVETKRSIMQHVTQIPYYIYIVILVLGWNEFMAILRNPFFFTLLIMLAGATYVMYSMNLLGPASIVVQRMANEALGLAKEKLREFVVDDHMQHGHNMKKMTTNDIELDDLSEEST.

The tract at residues 1–26 (MSNVPSPTVTLEGDSPDAAHEAVSSS) is disordered. Residues 1 to 733 (MSNVPSPTVT…KRSIMQHVTQ (733 aa)) lie on the Cytoplasmic side of the membrane. Positions 63-296 (PGDYRIISVF…SESFLFKPNY (234 aa)) constitute a GB1/RHD3-type G domain. 73 to 80 (GSQSTGKS) provides a ligand contact to GTP. The stretch at 659 to 688 (VRDKKLKRQYETVREEKEAEEEDEDEWDSE) forms a coiled coil. The interval 670-689 (TVREEKEAEEEDEDEWDSED) is disordered. Residues 676–689 (EAEEEDEDEWDSED) show a composition bias toward acidic residues. A helical transmembrane segment spans residues 734-754 (IPYYIYIVILVLGWNEFMAIL). Residues 755 to 757 (RNP) are Lumenal-facing. Residues 758-778 (FFFTLLIMLAGATYVMYSMNL) form a helical membrane-spanning segment. The Cytoplasmic segment spans residues 779-834 (LGPASIVVQRMANEALGLAKEKLREFVVDDHMQHGHNMKKMTTNDIELDDLSEEST).

Belongs to the TRAFAC class dynamin-like GTPase superfamily. GB1/RHD3 GTPase family. RHD3 subfamily.

The protein resides in the endoplasmic reticulum membrane. In terms of biological role, cooperates with the reticulon proteins and tubule-shaping DP1 family proteins to generate and maintain the structure of the tubular endoplasmic reticulum network. Has GTPase activity, which is required for its function in ER organization. In Clavispora lusitaniae (strain ATCC 42720) (Yeast), this protein is Protein SEY1.